Consider the following 96-residue polypeptide: Co-chaperonin GroES (96 aa).

This sequence belongs to the GroES chaperonin family. Heptamer of 7 subunits arranged in a ring. Interacts with the chaperonin GroEL.

The protein resides in the cytoplasm. Together with the chaperonin GroEL, plays an essential role in assisting protein folding. The GroEL-GroES system forms a nano-cage that allows encapsulation of the non-native substrate proteins and provides a physical environment optimized to promote and accelerate protein folding. GroES binds to the apical surface of the GroEL ring, thereby capping the opening of the GroEL channel. This is Co-chaperonin GroES from Shewanella pealeana (strain ATCC 700345 / ANG-SQ1).